The following is a 57-amino-acid chain: uncharacterized protein (57 aa).

Transmembrane regions (helical) follow at residues 4-26 (VNILSYFAFSVEAVLFPMSSELW) and 33-55 (ALGYGVEKICLYSFVLVLPIAIL).

Its subcellular location is the cell membrane. This is an uncharacterized protein from Methanocaldococcus jannaschii (strain ATCC 43067 / DSM 2661 / JAL-1 / JCM 10045 / NBRC 100440) (Methanococcus jannaschii).